The primary structure comprises 164 residues: Thiol peroxidase (164 aa).

In terms of domain architecture, Thioredoxin spans 16-162 (LQVGEIAHDF…YDAAIEAVKV (147 aa)). Residue Cys58 is the Cysteine sulfenic acid (-SOH) intermediate of the active site. Cys58 and Cys92 form a disulfide bridge.

It belongs to the peroxiredoxin family. Tpx subfamily. As to quaternary structure, homodimer.

The enzyme catalyses a hydroperoxide + [thioredoxin]-dithiol = an alcohol + [thioredoxin]-disulfide + H2O. Its function is as follows. Thiol-specific peroxidase that catalyzes the reduction of hydrogen peroxide and organic hydroperoxides to water and alcohols, respectively. Plays a role in cell protection against oxidative stress by detoxifying peroxides. The protein is Thiol peroxidase of Streptococcus parasanguinis.